The primary structure comprises 122 residues: Large ribosomal subunit protein bL12 (122 aa).

It belongs to the bacterial ribosomal protein bL12 family. As to quaternary structure, homodimer. Part of the ribosomal stalk of the 50S ribosomal subunit. Forms a multimeric L10(L12)X complex, where L10 forms an elongated spine to which 2 to 4 L12 dimers bind in a sequential fashion. Binds GTP-bound translation factors.

Forms part of the ribosomal stalk which helps the ribosome interact with GTP-bound translation factors. Is thus essential for accurate translation. The protein is Large ribosomal subunit protein bL12 of Xylella fastidiosa (strain M12).